Consider the following 326-residue polypeptide: MTADRWAGRTVLVTGALGFIGSHFVRQLEARGAEVLALYRTERPQLQAELAALDRVRLIRTELRDESDVRGAFKYLAPSIDTVVHCAAMDGNAQFKLERSAEILDSNQRTISHLLNCVRDFGVGEAVVMSSSELYCAPPTAAAHEDDDFRRSMRYTDNGYVLSKTYGEILARLHREQFGTNVFLVRPGNVYGPGDGYDPSRGRVIPSMLAKADAGEEIEIWGDGSQTRSFIHVTDLVRASLRLLETGKYPEMNVAGAEQVSILELARMVMAVLGRPERIRLDPGRPVGAPSRLLDLTRMSEVIDFEPQPLRTGLEETARWFRHHTR.

Residues 15-21 (GALGFIG) and 129-132 (MSSS) each bind NADP(+). Tyr160 serves as the catalytic Proton donor/acceptor. NADP(+) is bound by residues Lys164 and 187-190 (PGNV).

Belongs to the NAD(P)-dependent epimerase/dehydratase family.

It catalyses the reaction dTDP-6-deoxy-alpha-D-allose + NAD(+) = dTDP-4-dehydro-6-deoxy-alpha-D-allose + NADH + H(+). The enzyme catalyses dTDP-6-deoxy-alpha-D-allose + NADP(+) = dTDP-4-dehydro-6-deoxy-alpha-D-allose + NADPH + H(+). Functionally, catalyzes the stereospecific reduction of the C-4 keto group of dTDP-4-dehydro-6-deoxy-D-allose, leading to dTDP-6-deoxy-D-allose, an intermediate in the biosynthesis of the mycinose moiety of the chalcomycin antibiotic. This chain is dTDP-4-dehydro-6-deoxy-D-allose reductase (chmD), found in Streptomyces bikiniensis.